The chain runs to 184 residues: Inosine triphosphate pyrophosphatase (184 aa).

10–15 (TGNANK) contacts ITP. Glutamate 38 is a binding site for Mg(2+). Residues lysine 50, 66–67 (DT), lysine 83, 142–145 (FGWD), lysine 163, and 168–169 (HR) each bind ITP.

It belongs to the HAM1 NTPase family. In terms of assembly, homodimer. Mg(2+) is required as a cofactor. Mn(2+) serves as cofactor.

Its subcellular location is the cytoplasm. The protein resides in the nucleus. The enzyme catalyses ITP + H2O = IMP + diphosphate + H(+). It carries out the reaction dITP + H2O = dIMP + diphosphate + H(+). The catalysed reaction is XTP + H2O = XMP + diphosphate + H(+). In terms of biological role, pyrophosphatase that hydrolyzes non-canonical purine nucleotides such as inosine triphosphate (ITP), deoxyinosine triphosphate (dITP) or xanthosine 5'-triphosphate (XTP) to their respective monophosphate derivatives. The enzyme does not distinguish between the deoxy- and ribose forms. Probably excludes non-canonical purines from RNA and DNA precursor pools, thus preventing their incorporation into RNA and DNA and avoiding chromosomal lesions. The sequence is that of Inosine triphosphate pyrophosphatase from Fusarium vanettenii (strain ATCC MYA-4622 / CBS 123669 / FGSC 9596 / NRRL 45880 / 77-13-4) (Fusarium solani subsp. pisi).